The primary structure comprises 138 residues: Ribosome-binding factor A (138 aa).

The disordered stretch occupies residues 112-138 (EARTQGQEPAADVEPAPGAAPDDEAEE). Residues 119 to 131 (EPAADVEPAPGAA) show a composition bias toward low complexity.

This sequence belongs to the RbfA family. Monomer. Binds 30S ribosomal subunits, but not 50S ribosomal subunits or 70S ribosomes.

The protein resides in the cytoplasm. One of several proteins that assist in the late maturation steps of the functional core of the 30S ribosomal subunit. Associates with free 30S ribosomal subunits (but not with 30S subunits that are part of 70S ribosomes or polysomes). Required for efficient processing of 16S rRNA. May interact with the 5'-terminal helix region of 16S rRNA. The chain is Ribosome-binding factor A from Anaeromyxobacter dehalogenans (strain 2CP-C).